Here is a 227-residue protein sequence, read N- to C-terminus: PKHD-type hydroxylase ACIAD0531 (227 aa).

Residues 78 to 178 form the Fe2OG dioxygenase domain; that stretch reads HIIPPLFNRY…RFASFFWVQS (101 aa). 3 residues coordinate Fe cation: H96, D98, and H159. A 2-oxoglutarate-binding site is contributed by R169.

The cofactor is Fe(2+). L-ascorbate serves as cofactor.

The chain is PKHD-type hydroxylase ACIAD0531 from Acinetobacter baylyi (strain ATCC 33305 / BD413 / ADP1).